A 443-amino-acid polypeptide reads, in one-letter code: Threonine/serine transporter TdcC (443 aa).

11 consecutive transmembrane segments (helical) span residues 22–42 (TTWTLGLFGTAIGAGVLFFPI), 44–64 (AGFGGLIPILVMLVLAYPIAF), 97–117 (GVVITFLYFFAICPLLWIYGV), 140–160 (VVALLLLLLMAFVIWFGKDLM), 163–183 (VMSYLVWPFIASLVVISLSLI), 207–227 (ILVTVWLGISIMVFSFNFSPI), 259–279 (ASMLMVAVVMFFAFSCLFTLS), 319–339 (ASIIALVAIFKSFFGHYLGTL), 366–386 (LSMVFIMGSTWVVAYANPNIL), 389–409 (IEAMGAPIIASLLCLLPMYAI), and 423–443 (DNLFVTAIGLLTILNIVYKLF).

The protein belongs to the amino acid/polyamine transporter 2 family. SdaC/TdcC subfamily.

Its subcellular location is the cell inner membrane. It catalyses the reaction L-threonine(in) + H(+)(in) = L-threonine(out) + H(+)(out). The catalysed reaction is L-serine(in) + H(+)(in) = L-serine(out) + H(+)(out). In terms of biological role, involved in the import of threonine and serine into the cell, with the concomitant import of a proton (symport system). This chain is Threonine/serine transporter TdcC, found in Klebsiella pneumoniae (strain 342).